Reading from the N-terminus, the 235-residue chain is tRNA (guanine-N(7)-)-methyltransferase (235 aa).

Residues G60, E83–I84, N116–A117, and L136 contribute to the S-adenosyl-L-methionine site. D139 is a catalytic residue. S214–E216 is an S-adenosyl-L-methionine binding site.

Belongs to the class I-like SAM-binding methyltransferase superfamily. TrmB family.

It is found in the nucleus. The enzyme catalyses guanosine(46) in tRNA + S-adenosyl-L-methionine = N(7)-methylguanosine(46) in tRNA + S-adenosyl-L-homocysteine. Its pathway is tRNA modification; N(7)-methylguanine-tRNA biosynthesis. Functionally, catalyzes the formation of N(7)-methylguanine at position 46 (m7G46) in tRNA. This chain is tRNA (guanine-N(7)-)-methyltransferase, found in Anopheles gambiae (African malaria mosquito).